The primary structure comprises 331 residues: Aldo-keto reductase family 7 member A3 (331 aa).

Position 6 is a phosphoserine (Ser6). Residues Met17, Asp44, and Tyr49 each coordinate NADPH. Catalysis depends on Tyr49, which acts as the Proton donor. Ser85 is subject to Phosphoserine. NADPH-binding residues include His113, Ser143, Asn144, Asn198, Leu200, Gly202, Lys208, Tyr209, and Arg222. Thr227 bears the Phosphothreonine mark. NADPH is bound by residues Ser290, Gln294, and Asn298.

It belongs to the aldo/keto reductase family. Aldo/keto reductase 2 subfamily. In terms of assembly, homodimer. Expressed in colon, kidney, liver, pancreas, adenocarcinoma and endometrium.

Its subcellular location is the cytoplasm. The catalysed reaction is a primary alcohol + NADP(+) = an aldehyde + NADPH + H(+). It carries out the reaction aflatoxin B1 dialdehyde + NADPH + H(+) = aflatoxin B1 C(6a)-monoaldehyde + NADP(+). It catalyses the reaction aflatoxin B1 dialdehyde + NADPH + H(+) = aflatoxin B1 C(8)-monoaldehyde + NADP(+). The enzyme catalyses aflatoxin B1 C(6a)-monoaldehyde + NADPH + 2 H(+) = aflatoxin B1 triol + NADP(+). With respect to regulation, inhibited by citrate. Functionally, catalyzes the NADPH-dependent reduction of various carbonyl-containing compounds, including aldehydes, ketones, and toxic products from cellular metabolism or environmental exposure. Can reduce the dialdehyde form of aflatoxin B1 (AFB1) into alcohol derivatives, via monoaldehydes intermediates. Can reduce the dialdehyde form of aflatoxin B1 (AFB1) into alcohol derivatives, via monoaldehydes intermediates, thus preventing the formation of protein adducts that contribute to AFB1-induced toxicity. The chain is Aldo-keto reductase family 7 member A3 from Homo sapiens (Human).